The sequence spans 287 residues: Bifunctional protein FolD (287 aa).

Residues 166–168 (GAS) and I232 contribute to the NADP(+) site.

It belongs to the tetrahydrofolate dehydrogenase/cyclohydrolase family. As to quaternary structure, homodimer.

It catalyses the reaction (6R)-5,10-methylene-5,6,7,8-tetrahydrofolate + NADP(+) = (6R)-5,10-methenyltetrahydrofolate + NADPH. It carries out the reaction (6R)-5,10-methenyltetrahydrofolate + H2O = (6R)-10-formyltetrahydrofolate + H(+). It participates in one-carbon metabolism; tetrahydrofolate interconversion. Catalyzes the oxidation of 5,10-methylenetetrahydrofolate to 5,10-methenyltetrahydrofolate and then the hydrolysis of 5,10-methenyltetrahydrofolate to 10-formyltetrahydrofolate. The protein is Bifunctional protein FolD of Aeromonas hydrophila subsp. hydrophila (strain ATCC 7966 / DSM 30187 / BCRC 13018 / CCUG 14551 / JCM 1027 / KCTC 2358 / NCIMB 9240 / NCTC 8049).